The primary structure comprises 147 residues: Holdfast attachment protein A (147 aa).

Its function is as follows. Involved in attachment of the holdfast to the cell. The holdfast is a structure that allows the bacteria to firmly adheres to surfaces. The polypeptide is Holdfast attachment protein A (hfaA) (Caulobacter vibrioides (strain ATCC 19089 / CIP 103742 / CB 15) (Caulobacter crescentus)).